A 265-amino-acid chain; its full sequence is Undecaprenyl-diphosphatase (265 aa).

Helical transmembrane passes span 38–58 (SDMFNIVIQAGAILAVTIIYW), 80–100 (LIVAFLITAILGLVVKKLGFE), 107–127 (PIAWALIIGGIWMIFAEWAAA), 135–155 (ITWLVAILVGIAQIVAGVFPG), 175–195 (AAATEFAFLVGIPTMYAASGY), 213–233 (ALAIAFVVSTIVAFIAVKWLL), and 244–264 (FAIYRIILGVLLLGMTATGMI).

Belongs to the UppP family.

The protein resides in the cell inner membrane. The catalysed reaction is di-trans,octa-cis-undecaprenyl diphosphate + H2O = di-trans,octa-cis-undecaprenyl phosphate + phosphate + H(+). In terms of biological role, catalyzes the dephosphorylation of undecaprenyl diphosphate (UPP). Confers resistance to bacitracin. The sequence is that of Undecaprenyl-diphosphatase from Rhizobium etli (strain ATCC 51251 / DSM 11541 / JCM 21823 / NBRC 15573 / CFN 42).